The chain runs to 377 residues: Short chain dehydrogenase gsfE (377 aa).

Asp89, Gln121, Tyr226, Ala266, and Ser268 together coordinate NADP(+). Residue Tyr226 is the Proton donor of the active site.

Belongs to the short-chain dehydrogenases/reductases (SDR) family. Highly divergent.

It catalyses the reaction dehydrogriseofulvin + NADPH + H(+) = griseofulvin + NADP(+). It functions in the pathway secondary metabolite biosynthesis; terpenoid biosynthesis. Functionally, short chain dehydrogenase; part of the gene cluster that mediates the biosynthesis of griseofulvin, an important antifungal drug that has been in use for a long time for treating dermatophyte infections. The first step of the pathway is the formation of the heptaketide backbone by gsfA which is initiated by priming with acetyl-CoA, followed by sequential condensations of 6 malonyl-CoA units. The resulting benzophenone can undergo a spontaneous dehydration to form norlichexanthone. However, the true precursor for the griseofulvin biosynthesis is not norlichexanthone, but the heptaketide benzophenone that is O-methylated at 3-OH by gsfB to produce griseophenone D which is further methylated at 9-OH by gsfC to yield griseophenone C. Griseophenone C is then substrate of halogenase gsfI which is responsible for the regio-specific chlorination at the C13 position to form griseophenone B. The cytochrome P450 gsfF catalyzes the coupling of orcinol and phloroglucinol rings in griseophenone B to form desmethyl-dehydrogriseofulvin A which is further methylated at 5-OH by gsfD to yield dehydrogriseofulvin. Finally, gsfE performs stereospecific reduction of enone 18 of dehydrogriseofulvin to afford the final product griseofulvin. This chain is Short chain dehydrogenase gsfE, found in Penicillium aethiopicum.